Consider the following 335-residue polypeptide: Serpentine receptor class gamma-11 (335 aa).

A run of 7 helical transmembrane segments spans residues 33–53 (FLQIAYLIPGGILNILLLYTI), 66–86 (FFLIYSTDCFVSFSMIFLDII), 98–118 (PIIAPMFYEPLIGFKIMMIVL), 154–174 (LKYLIILVFVIPFSIDWNLII), 202–222 (FQLIFITIALLFTIVCTSVIF), 242–262 (GTAYISMSFIILVVFQFLFAF), and 271–291 (TIFGYSLLSYDILNVGSPIIM).

The protein belongs to the nematode receptor-like protein srg family.

It localises to the membrane. The polypeptide is Serpentine receptor class gamma-11 (srg-11) (Caenorhabditis elegans).